A 184-amino-acid polypeptide reads, in one-letter code: Photosystem I assembly protein Ycf4 (184 aa).

The next 2 membrane-spanning stretches (helical) occupy residues 19–39 and 57–77; these read ISNF…LLVG and IIFF…LFIS.

It belongs to the Ycf4 family.

It localises to the plastid. The protein localises to the chloroplast thylakoid membrane. Functionally, seems to be required for the assembly of the photosystem I complex. In Drimys granadensis, this protein is Photosystem I assembly protein Ycf4.